A 223-amino-acid polypeptide reads, in one-letter code: Small ribosomal subunit protein uS3 (223 aa).

A KH type-2 domain is found at Ile39–Lys108.

It belongs to the universal ribosomal protein uS3 family. In terms of assembly, part of the 30S ribosomal subunit. Forms a tight complex with proteins S10 and S14.

Binds the lower part of the 30S subunit head. Binds mRNA in the 70S ribosome, positioning it for translation. The polypeptide is Small ribosomal subunit protein uS3 (Clostridium botulinum (strain Okra / Type B1)).